Here is a 154-residue protein sequence, read N- to C-terminus: General odorant-binding protein 83a (154 aa).

The first 33 residues, M1–A33, serve as a signal peptide directing secretion. Disulfide bonds link C55–C86, C82–C133, and C124–C142.

It belongs to the PBP/GOBP family. As to expression, in the ventrolateral region of the antenna, expressed in two distinct types of olfactory hairs: in most sensilla trichodea and in a subset of the small sensilla basiconica (at protein level).

It is found in the secreted. This chain is General odorant-binding protein 83a (Obp83a), found in Drosophila melanogaster (Fruit fly).